A 250-amino-acid chain; its full sequence is Probable cytokinin riboside 5'-monophosphate phosphoribohydrolase LOGL6 (250 aa).

Residues glutamate 98, 116 to 117 (RK), and 133 to 139 (GYGTLEE) each bind substrate.

This sequence belongs to the LOG family. In terms of tissue distribution, expressed in roots, leaves, stems, tiller buds, shoot apex, immature inflorescences and flowers.

It catalyses the reaction N(6)-(dimethylallyl)adenosine 5'-phosphate + H2O = N(6)-dimethylallyladenine + D-ribose 5-phosphate. The catalysed reaction is 9-ribosyl-trans-zeatin 5'-phosphate + H2O = trans-zeatin + D-ribose 5-phosphate. In terms of biological role, cytokinin-activating enzyme working in the direct activation pathway. Phosphoribohydrolase that converts inactive cytokinin nucleotides to the biologically active free-base forms. The chain is Probable cytokinin riboside 5'-monophosphate phosphoribohydrolase LOGL6 (LOGL6) from Oryza sativa subsp. japonica (Rice).